Consider the following 304-residue polypeptide: UDP-3-O-acyl-N-acetylglucosamine deacetylase (304 aa).

Residues His-78, His-237, and Asp-241 each contribute to the Zn(2+) site. His-264 (proton donor) is an active-site residue.

It belongs to the LpxC family. The cofactor is Zn(2+).

It catalyses the reaction a UDP-3-O-[(3R)-3-hydroxyacyl]-N-acetyl-alpha-D-glucosamine + H2O = a UDP-3-O-[(3R)-3-hydroxyacyl]-alpha-D-glucosamine + acetate. Its pathway is glycolipid biosynthesis; lipid IV(A) biosynthesis; lipid IV(A) from (3R)-3-hydroxytetradecanoyl-[acyl-carrier-protein] and UDP-N-acetyl-alpha-D-glucosamine: step 2/6. Functionally, catalyzes the hydrolysis of UDP-3-O-myristoyl-N-acetylglucosamine to form UDP-3-O-myristoylglucosamine and acetate, the committed step in lipid A biosynthesis. This is UDP-3-O-acyl-N-acetylglucosamine deacetylase from Xylella fastidiosa (strain Temecula1 / ATCC 700964).